A 158-amino-acid chain; its full sequence is Transcription elongation factor GreA (158 aa).

Residues 49-73 are a coiled coil; it reads QAAREQQGFIEGRIKEIEAKLANAQ.

Belongs to the GreA/GreB family.

Functionally, necessary for efficient RNA polymerase transcription elongation past template-encoded arresting sites. The arresting sites in DNA have the property of trapping a certain fraction of elongating RNA polymerases that pass through, resulting in locked ternary complexes. Cleavage of the nascent transcript by cleavage factors such as GreA or GreB allows the resumption of elongation from the new 3'terminus. GreA releases sequences of 2 to 3 nucleotides. The polypeptide is Transcription elongation factor GreA (Methylococcus capsulatus (strain ATCC 33009 / NCIMB 11132 / Bath)).